The primary structure comprises 28 residues: Palustrin-1a (28 aa).

A disulfide bond links C22 and C28.

As to expression, expressed by the skin glands.

It is found in the secreted. In terms of biological role, antimicrobial activity against Gram-negative bacterium E.coli. This Lithobates palustris (Pickerel frog) protein is Palustrin-1a.